The primary structure comprises 305 residues: MSCLGRILSVSYPPDPYGSRLSVSKLSSPGRNRRLRWRFTALDSDSSSLDSDSSDKFAAGFCIIEGPETVQDFAKMQLQEIQDNIRSRRNKIFLHMEEVRRLRIQQRIRNTELGIIDEEQEHELPNFPSFIPFLPPLTAANLRVYYATCFSLIAGIILFGGLLAPTLELKLGIGGTSYKDFIQSLHLPMQLSQVDPIVASFSGGAVGVISALMVVEVNNVKQQEHKRCKYCLGTGYLACARCSSTGSLIISEPVSAIAGGNHSVSTSKTERCSNCSGAGKVMCPTCLCTGMAMASEHDPRIDPFL.

Residues 1–54 constitute a chloroplast transit peptide; sequence MSCLGRILSVSYPPDPYGSRLSVSKLSSPGRNRRLRWRFTALDSDSSSLDSDSS. A run of 2 helical transmembrane segments spans residues 144–164 and 197–217; these read VYYATCFSLIAGIILFGGLLA and IVASFSGGAVGVISALMVVEV. Residues 206-297 are CR-type-like; sequence VGVISALMVV…CTGMAMASEH (92 aa). A CXXCXGXG motif repeat occupies 228–235; it reads CKYCLGTG. The CXXCXXXG motif repeat unit spans residues 239-246; sequence CARCSSTG. A CXXCXGXG motif repeat occupies 272–279; it reads CSNCSGAG. The CXXCXXXG motif repeat unit spans residues 283–290; sequence CPTCLCTG.

This sequence belongs to the orange-like family. As to quaternary structure, interacts with ERF1-2. Expressed in young leaves, curds and flower buds.

It is found in the plastid. The protein resides in the chloroplast membrane. It localises to the nucleus. Functionally, involved in chromoplast differentiation. Is associated with a cellular process that triggers the differentiation of pro-plastids or other non-colored plastids into chromoplasts for carotenoid accumulation. Associated with carotenoid accumulation in de-etiolated cotyledons. Controls leaf petiole elongation by suppressing the expression of ERF1 genes. This chain is Protein ORANGE, chloroplastic, found in Brassica oleracea var. botrytis (Cauliflower).